A 919-amino-acid polypeptide reads, in one-letter code: Transcriptional regulatory protein EDS1 (919 aa).

The tract at residues 1–54 (MSHHVPNLYGTPIRDPHERKRNSASMGEVNQSVSSRNCERGSEKGTKQRKKASH) is disordered. The span at 23–36 (SASMGEVNQSVSSR) shows a compositional bias: polar residues. Over residues 37–46 (NCERGSEKGT) the composition is skewed to basic and acidic residues. A DNA-binding region (zn(2)-C6 fungal-type) is located at residues 56-85 (CDQCRRKRIKCRFDKHTGVCQGCLEVGEKC). Residues 297 to 338 (AGFPNKKLGTDGRSDKWDKNSTWKPVYRSSNPSHPSTEKNVS) form a disordered region. The segment covering 304–317 (LGTDGRSDKWDKNS) has biased composition (basic and acidic residues). Residues 318 to 338 (TWKPVYRSSNPSHPSTEKNVS) show a composition bias toward polar residues.

It belongs to the EDS1/RGT1 family. As to quaternary structure, binds DNA in a sequence-specific manner.

The protein localises to the nucleus. In Saccharomyces cerevisiae (strain ATCC 204508 / S288c) (Baker's yeast), this protein is Transcriptional regulatory protein EDS1 (EDS1).